The chain runs to 368 residues: Homoserine O-acetyltransferase (368 aa).

The AB hydrolase-1 domain occupies 47-349; it reads NAILICHALS…SGEGHDSFLL (303 aa). The active-site Nucleophile is serine 153. Arginine 221 contributes to the substrate binding site. Active-site residues include aspartate 311 and histidine 344. Aspartate 345 provides a ligand contact to substrate.

The protein belongs to the AB hydrolase superfamily. MetX family. In terms of assembly, homodimer.

The protein localises to the cytoplasm. It catalyses the reaction L-homoserine + acetyl-CoA = O-acetyl-L-homoserine + CoA. Its pathway is amino-acid biosynthesis; L-methionine biosynthesis via de novo pathway; O-acetyl-L-homoserine from L-homoserine: step 1/1. Its function is as follows. Transfers an acetyl group from acetyl-CoA to L-homoserine, forming acetyl-L-homoserine. This is Homoserine O-acetyltransferase from Leptospira borgpetersenii serovar Hardjo-bovis (strain JB197).